We begin with the raw amino-acid sequence, 331 residues long: Phosphate acyltransferase (331 aa).

Belongs to the PlsX family. Homodimer. Probably interacts with PlsY.

The protein localises to the cytoplasm. It carries out the reaction a fatty acyl-[ACP] + phosphate = an acyl phosphate + holo-[ACP]. It functions in the pathway lipid metabolism; phospholipid metabolism. In terms of biological role, catalyzes the reversible formation of acyl-phosphate (acyl-PO(4)) from acyl-[acyl-carrier-protein] (acyl-ACP). This enzyme utilizes acyl-ACP as fatty acyl donor, but not acyl-CoA. The protein is Phosphate acyltransferase of Ureaplasma parvum serovar 3 (strain ATCC 27815 / 27 / NCTC 11736).